Here is an 879-residue protein sequence, read N- to C-terminus: Alanine--tRNA ligase (879 aa).

4 residues coordinate Zn(2+): His-566, His-570, Cys-668, and His-672.

Belongs to the class-II aminoacyl-tRNA synthetase family. It depends on Zn(2+) as a cofactor.

The protein localises to the cytoplasm. The catalysed reaction is tRNA(Ala) + L-alanine + ATP = L-alanyl-tRNA(Ala) + AMP + diphosphate. Catalyzes the attachment of alanine to tRNA(Ala) in a two-step reaction: alanine is first activated by ATP to form Ala-AMP and then transferred to the acceptor end of tRNA(Ala). Also edits incorrectly charged Ser-tRNA(Ala) and Gly-tRNA(Ala) via its editing domain. This is Alanine--tRNA ligase from Clostridium kluyveri (strain ATCC 8527 / DSM 555 / NBRC 12016 / NCIMB 10680 / K1).